A 264-amino-acid chain; its full sequence is Thymidylate synthase (264 aa).

Arginine 21 is a binding site for dUMP. Residue histidine 51 coordinates (6R)-5,10-methylene-5,6,7,8-tetrahydrofolate. 126–127 (RR) serves as a coordination point for dUMP. Catalysis depends on cysteine 146, which acts as the Nucleophile. Residues 166–169 (RSCD), asparagine 177, and 207–209 (HLY) contribute to the dUMP site. Aspartate 169 contacts (6R)-5,10-methylene-5,6,7,8-tetrahydrofolate. Position 263 (serine 263) interacts with (6R)-5,10-methylene-5,6,7,8-tetrahydrofolate.

Belongs to the thymidylate synthase family. Bacterial-type ThyA subfamily. As to quaternary structure, homodimer.

Its subcellular location is the cytoplasm. It catalyses the reaction dUMP + (6R)-5,10-methylene-5,6,7,8-tetrahydrofolate = 7,8-dihydrofolate + dTMP. It functions in the pathway pyrimidine metabolism; dTTP biosynthesis. Functionally, catalyzes the reductive methylation of 2'-deoxyuridine-5'-monophosphate (dUMP) to 2'-deoxythymidine-5'-monophosphate (dTMP) while utilizing 5,10-methylenetetrahydrofolate (mTHF) as the methyl donor and reductant in the reaction, yielding dihydrofolate (DHF) as a by-product. This enzymatic reaction provides an intracellular de novo source of dTMP, an essential precursor for DNA biosynthesis. This Buchnera aphidicola subsp. Acyrthosiphon pisum (strain 5A) protein is Thymidylate synthase.